The chain runs to 295 residues: Acetylglutamate kinase (295 aa).

Residues glycine 66–glycine 67, arginine 88, and asparagine 193 contribute to the substrate site.

It belongs to the acetylglutamate kinase family. ArgB subfamily.

It localises to the cytoplasm. It catalyses the reaction N-acetyl-L-glutamate + ATP = N-acetyl-L-glutamyl 5-phosphate + ADP. The protein operates within amino-acid biosynthesis; L-arginine biosynthesis; N(2)-acetyl-L-ornithine from L-glutamate: step 2/4. Functionally, catalyzes the ATP-dependent phosphorylation of N-acetyl-L-glutamate. This chain is Acetylglutamate kinase, found in Afipia carboxidovorans (strain ATCC 49405 / DSM 1227 / KCTC 32145 / OM5) (Oligotropha carboxidovorans).